We begin with the raw amino-acid sequence, 590 residues long: Aspartate--tRNA(Asp/Asn) ligase (590 aa).

Residue glutamate 170 participates in L-aspartate binding. The tract at residues 194 to 197 (QLFK) is aspartate. Arginine 216 lines the L-aspartate pocket. ATP contacts are provided by residues 216–218 (RDE) and glutamine 225. An L-aspartate-binding site is contributed by histidine 448. Residue glutamate 482 coordinates ATP. L-aspartate is bound at residue arginine 489. ATP is bound at residue 534–537 (GWDR). Residues 557 to 590 (SGGGADPLTGAPAPITPQQRRESGIDAKPKKDGE) are disordered. The segment covering 575–590 (QRRESGIDAKPKKDGE) has biased composition (basic and acidic residues).

It belongs to the class-II aminoacyl-tRNA synthetase family. Type 1 subfamily. Homodimer.

The protein localises to the cytoplasm. It carries out the reaction tRNA(Asx) + L-aspartate + ATP = L-aspartyl-tRNA(Asx) + AMP + diphosphate. Aspartyl-tRNA synthetase with relaxed tRNA specificity since it is able to aspartylate not only its cognate tRNA(Asp) but also tRNA(Asn). Reaction proceeds in two steps: L-aspartate is first activated by ATP to form Asp-AMP and then transferred to the acceptor end of tRNA(Asp/Asn). The polypeptide is Aspartate--tRNA(Asp/Asn) ligase (Mycobacterium sp. (strain JLS)).